A 578-amino-acid chain; its full sequence is MHMNKPLQAWRTPLLTLIFVLPLTATGAVKLTLDGMNSTLDNGLLKVRFGADGSAKEVWKGGTNLISRLSGAARDPDKNRSFYLDYYSGGVNEFVPERLEVIKQTPDQVHLAYIDDQNGKLRLEYHLIMTRDVSGLYSYVVAANTGSAPVTVSELRNVYRFDATRLDTLFNSIRRGTPLLYDELEQLPKVQDETWRLPDGSVYSKYDFAGYQRESRYWGVMGNGYGAWMVPASGEYYSGDALKQELLVHQDAIILNYLTGSHFGTPDMVAQPGFEKLYGPWLLYINQGNDRELVADVSRRAEHERASWPYRWLDDARYPRQRATVSGRLRTEAPHATVVLNSSAENFDIQTTGYLFSARTNRDGRFSLSNVPPGEYRLSAYADGGTQIGLLAQQTVRVEGKKTRLGQIDARQPAPLAWAIGQADRRADEFRFGDKPRQYRWQTEVPADLTFEIGKSRERKDWYYAQTQPGSWHILFNTRTPEQPYTLNIAIAAASNNGMTTPASSPQLAVKLNGQLLTTLKYDNDKSIYRGAMQSGRYHEAHIPLPAGALQQGGNRITLELLGGMVMYDAITLTETPQ.

A signal peptide spans 1–27 (MHMNKPLQAWRTPLLTLIFVLPLTATG).

Belongs to the polysaccharide lyase 4 family.

It localises to the secreted. It catalyses the reaction Endotype eliminative cleavage of L-alpha-rhamnopyranosyl-(1-&gt;4)-alpha-D-galactopyranosyluronic acid bonds of rhamnogalacturonan I domains in ramified hairy regions of pectin leaving L-rhamnopyranose at the reducing end and 4-deoxy-4,5-unsaturated D-galactopyranosyluronic acid at the non-reducing end.. Its function is as follows. Degrades the rhamnogalacturonan I (RG-I) backbone of pectin. Is required for the full virulence of E.chrysanthemi strain 3937 as it is involved in rotting of plant tissue. This Dickeya dadantii (strain 3937) (Erwinia chrysanthemi (strain 3937)) protein is Rhamnogalacturonate lyase (rhiE).